Consider the following 183-residue polypeptide: Translation initiation factor IF-3 (183 aa).

Belongs to the IF-3 family. In terms of assembly, monomer.

Its subcellular location is the cytoplasm. IF-3 binds to the 30S ribosomal subunit and shifts the equilibrium between 70S ribosomes and their 50S and 30S subunits in favor of the free subunits, thus enhancing the availability of 30S subunits on which protein synthesis initiation begins. The protein is Translation initiation factor IF-3 of Pseudomonas putida (strain ATCC 700007 / DSM 6899 / JCM 31910 / BCRC 17059 / LMG 24140 / F1).